We begin with the raw amino-acid sequence, 250 residues long: Flavin-dependent thymidylate synthase (250 aa).

The region spanning 7–233 (LRVQLIAKTE…PQVFSDFEIT (227 aa)) is the ThyX domain. FAD is bound by residues S71, 95–97 (RHR), and Q103. DUMP is bound by residues 92–95 (ELIR), 103–107 (QLSQR), and R172. Residues 95–105 (RHRHFSYSQLS) carry the ThyX motif motif. FAD contacts are provided by residues 188–190 (NYR) and H194. R199 contributes to the dUMP binding site. Catalysis depends on R199, which acts as the Involved in ionization of N3 of dUMP, leading to its activation.

Belongs to the thymidylate synthase ThyX family. Homotetramer. FAD is required as a cofactor.

It catalyses the reaction dUMP + (6R)-5,10-methylene-5,6,7,8-tetrahydrofolate + NADPH + H(+) = dTMP + (6S)-5,6,7,8-tetrahydrofolate + NADP(+). It participates in pyrimidine metabolism; dTTP biosynthesis. Functionally, catalyzes the reductive methylation of 2'-deoxyuridine-5'-monophosphate (dUMP) to 2'-deoxythymidine-5'-monophosphate (dTMP) while utilizing 5,10-methylenetetrahydrofolate (mTHF) as the methyl donor, and NADPH and FADH(2) as the reductant. In Mycolicibacterium gilvum (strain PYR-GCK) (Mycobacterium gilvum (strain PYR-GCK)), this protein is Flavin-dependent thymidylate synthase.